Here is a 235-residue protein sequence, read N- to C-terminus: uncharacterized protein (235 aa).

The protein to E.coli YbeR.

This is an uncharacterized protein from Escherichia coli (strain K12).